A 239-amino-acid chain; its full sequence is Fumarate reductase iron-sulfur subunit (239 aa).

The 2Fe-2S ferredoxin-type domain occupies 5–95 (LTIRVFKYDP…DGVITLLPLP (91 aa)). Residues Cys-57, Cys-62, Cys-65, and Cys-77 each coordinate [2Fe-2S] cluster. Residues 142–171 (AQEVFELDRCIECGCCIAACGTKIMREDFV) enclose the 4Fe-4S ferredoxin-type domain. Cys-151, Cys-154, and Cys-157 together coordinate [4Fe-4S] cluster. Cys-161, Cys-208, and Cys-214 together coordinate [3Fe-4S] cluster. A [4Fe-4S] cluster-binding site is contributed by Cys-218.

It belongs to the succinate dehydrogenase/fumarate reductase iron-sulfur protein family. Part of an enzyme complex containing three subunits: a flavoprotein (frdA), an iron-sulfur protein (frdB), and diheme cytochrome b (frdC). [2Fe-2S] cluster serves as cofactor. It depends on [3Fe-4S] cluster as a cofactor. The cofactor is [4Fe-4S] cluster.

The protein localises to the cell inner membrane. It carries out the reaction a menaquinone + succinate = a menaquinol + fumarate. The fumarate reductase enzyme complex is required for fumarate respiration using formate or sulfide as electron donor. This is Fumarate reductase iron-sulfur subunit (frdB) from Wolinella succinogenes (strain ATCC 29543 / DSM 1740 / CCUG 13145 / JCM 31913 / LMG 7466 / NCTC 11488 / FDC 602W) (Vibrio succinogenes).